The chain runs to 359 residues: 3-dehydroquinate synthase (359 aa).

Residues 71–76, 105–109, 129–130, lysine 142, and lysine 151 contribute to the NAD(+) site; these read DGEAYK, GVVGD, and TT. Zn(2+) is bound by residues glutamate 184, histidine 247, and histidine 264.

It belongs to the sugar phosphate cyclases superfamily. Dehydroquinate synthase family. It depends on Co(2+) as a cofactor. Requires Zn(2+) as cofactor. NAD(+) serves as cofactor.

Its subcellular location is the cytoplasm. The catalysed reaction is 7-phospho-2-dehydro-3-deoxy-D-arabino-heptonate = 3-dehydroquinate + phosphate. It functions in the pathway metabolic intermediate biosynthesis; chorismate biosynthesis; chorismate from D-erythrose 4-phosphate and phosphoenolpyruvate: step 2/7. Its function is as follows. Catalyzes the conversion of 3-deoxy-D-arabino-heptulosonate 7-phosphate (DAHP) to dehydroquinate (DHQ). The polypeptide is 3-dehydroquinate synthase (Burkholderia lata (strain ATCC 17760 / DSM 23089 / LMG 22485 / NCIMB 9086 / R18194 / 383)).